The following is a 722-amino-acid chain: Delta-like protein 1 (722 aa).

The signal sequence occupies residues M1 to C17. Residues Q18 to W545 lie on the Extracellular side of the membrane. Residues F176–C220 form the DSL domain. 27 disulfide bridges follow: C178/C187, C191/C203, C211/C220, C225/C236, C229/C242, C244/C253, C256/C267, C262/C273, C275/C284, C291/C303, C297/C313, C315/C324, C331/C342, C336/C351, C353/C362, C369/C380, C374/C390, C392/C401, C408/C419, C413/C428, C430/C439, C446/C457, C451/C466, C468/C477, C484/C495, C489/C504, and C506/C515. 3 EGF-like domains span residues C225–C253, C256–C284, and C291–C324. One can recognise an EGF-like 4; calcium-binding domain in the interval C331–C362. EGF-like domains follow at residues C369 to C401 and C408 to C439. The 32-residue stretch at C446–C477 folds into the EGF-like 7; calcium-binding domain. N-linked (GlcNAc...) asparagine glycosylation is present at N476. The EGF-like 8 domain occupies C484–C515. A helical membrane pass occupies residues V546–C568. The Cytoplasmic segment spans residues V569 to V722. K613 participates in a covalent cross-link: Glycyl lysine isopeptide (Lys-Gly) (interchain with G-Cter in ubiquitin). T638 carries the phosphothreonine modification. Residues R655–K664 are compositionally biased toward basic and acidic residues. Residues R655 to T697 form a disordered region. The residue at position 693 (S693) is a Phosphoserine; by PKB. Position 696 is a phosphoserine (S696). Residues A719–V722 form an interaction with MAGI1 region.

As to quaternary structure, homodimer. Interacts with TJP1. Interacts with MMP14; inhibits DLL1-induced Notch signaling. Interacts with MAGI1 (via PDZ domain); forms a complex with CTNNB1 and CDH2 and promotes recruitment to the adherens junction and stabilization on the cell surface. Interacts with PSEN1; undergoes a presenilin-dependent gamma-secretase cleavage that releases a Dll1-intracellular form. Interacts with MFAP5. Interacts with MIB1. Interacts with NEURL1B; leads to ubiquitination. Interacts with NEURL1. Interacts with SYNJ2BP; enhances DLL1 protein stability, and promotes Notch signaling in endothelial cells. Interacts with MAGI1, MAGI2, MAGI3 and MPDZ. Interacts (via ubiquitin) with EPN1 (via IUM domain); binding with NOTCH1 attached to neighboring cell, promotes ligand ubiquitination and EPN1 interaction, leading to NECD transendocytosis and Notch signaling. Interacts with NOTCH1. Ubiquitinated by MIB (MIB1 or MIB2), leading to its endocytosis and subsequent degradation. Ubiquitinated; promotes recycling back to the plasma membrane and confers a strong affinity for NOTCH1. Multi-ubiquitination of Lys-613 by MIB1 promotes both cis and trans-interaction with NOTCH1, as well as activation of Notch signaling. Ubiquitinated by NEURL1B. In terms of processing, phosphorylated in a membrane association-dependent manner. Phosphorylation at Ser-696 requires the presence of Ser-693, whereas phosphorylation at Thr-638 and Ser-693 occurs independently of the other sites. Phosphorylation is required for full ligand activity in vitro and affects surface presentation, ectodomain shedding, and endocytosis. Post-translationally, cleaved by MMP14; negatively regulates DLL1-induced Notch signaling in HPCs, modulating B-lymphocyte differentiation in bone marrow. Undergoes two consecutive processing events: a shedding event, partially by ADAM10, that generates a soluble extracellular form and an intracellular membrane-anchored form, followed by a gamma-secretase cleavage releasing an intracellular fragment. O-fucosylated. Can be elongated to a disaccharide by MFNG. As to expression, in the embryo, expressed in the paraxial mesoderm and nervous system. Expressed at high levels in adult heart and at lower levels, in adult lung. Highly expressed in satellite cells from masseter and tongue than in satellite cells from leg and extraocular muscle.?.

Its subcellular location is the apical cell membrane. It is found in the cell junction. It localises to the adherens junction. The protein localises to the membrane raft. The protein resides in the cell membrane. Its subcellular location is the nucleus. In terms of biological role, transmembrane ligand protein of NOTCH1, NOTCH2 and NOTCH3 receptors that binds the extracellular domain (ECD) of Notch receptor in a cis and trans fashion manner. Following transinteraction, ligand cells produce mechanical force that depends of a clathrin-mediated endocytosis, requiring ligand ubiquitination, EPN1 interaction, and actin polymerisation; these events promote Notch receptor extracellular domain (NECD) transendocytosis and triggers Notch signaling through induction of cleavage, hyperphosphorylation, and nuclear accumulation of the intracellular domain of Notch receptors (NICD). Is required for embryonic development and maintenance of adult stem cells in many different tissues and immune systeme; the DLL1-induced Notch signaling is mediated through an intercellular communication that regulates cell lineage, cell specification, cell patterning and morphogenesis through effects on differentiation and proliferation. Plays a role in brain development at different level, namely by regulating neuronal differentiation of neural precursor cells via cell-cell interaction, most likely through the lateral inhibitory system in an endogenous level dependent-manner. During neocortex development, Dll1-Notch signaling transmission is mediated by dynamic interactions between intermediate neurogenic progenitors and radial glia; the cell-cell interactions are mediated via dynamic and transient elongation processes, likely to reactivate/maintain Notch activity in neighboring progenitors, and coordinate progenitor cell division and differentiation across radial and zonal boundaries. During cerebellar development, regulates Bergmann glial monolayer formation and its morphological maturation through a Notch signaling pathway. At the retina and spinal cord level, regulates neurogenesis by preventing the premature differentiation of neural progenitors and also by maintaining progenitors in spinal cord through Notch signaling pathway. Also controls neurogenesis of the neural tube in a progenitor domain-specific fashion along the dorsoventral axis. Maintains quiescence of neural stem cells and plays a role as a fate determinant that segregates asymmetrically to one daughter cell during neural stem cells mitosis, resulting in neuronal differentiation in Dll1-inheriting cell. Plays a role in immune systeme development, namely the development of all T-cells and marginal zone (MZ) B cells. Blocks the differentiation of progenitor cells into the B-cell lineage while promoting the emergence of a population of cells with the characteristics of a T-cell/NK-cell precursor. Upon MMP14 cleavage, negatively regulates Notch signaling in haematopoietic progenitor cells to specifically maintain normal B-cell development in bone marrow. Also plays a role during muscle development. During early development, inhibits myoblasts differentiation from the medial dermomyotomal lip and later regulates progenitor cell differentiation. Directly modulates cell adhesion and basal lamina formation in satellite cells through Notch signaling. Maintains myogenic progenitors pool by suppressing differentiation through down-regulation of MYOD1 and is required for satellite cell homing and PAX7 expression. During craniofacial and trunk myogenesis suppresses differentiation of cranial mesoderm-derived and somite-derived muscle via MYOD1 regulation but in cranial mesoderm-derived progenitors, is neither required for satellite cell homing nor for PAX7 expression. Also plays a role during pancreatic cell development. During type B pancreatic cell development, may be involved in the initiation of proximodistal patterning in the early pancreatic epithelium. Stimulates multipotent pancreatic progenitor cells proliferation and pancreatic growth by maintaining HES1 expression and PTF1A protein levels. During fetal stages of development, is required to maintain arterial identity and the responsiveness of arterial endothelial cells for VEGFA through regulation of KDR activation and NRP1 expression. Controls sprouting angiogenesis and subsequent vertical branch formation through regulation on tip cell differentiation. Negatively regulates goblet cell differentiation in intestine and controls secretory fat commitment through lateral inhibition in small intestine. Plays a role during inner ear development; negatively regulates auditory hair cell differentiation. Plays a role during nephron development through Notch signaling pathway. Regulates growth, blood pressure and energy homeostasis. The polypeptide is Delta-like protein 1 (Dll1) (Mus musculus (Mouse)).